The following is a 551-amino-acid chain: Palmdelphin (551 aa).

M1 carries the N-acetylmethionine modification. Residues 12–106 (QAITDKRKIQ…LQISANEEAI (95 aa)) adopt a coiled-coil conformation. K125 is covalently cross-linked (Glycyl lysine isopeptide (Lys-Gly) (interchain with G-Cter in SUMO2)). At S135 the chain carries Phosphoserine. K178 participates in a covalent cross-link: Glycyl lysine isopeptide (Lys-Gly) (interchain with G-Cter in SUMO1); alternate. K178 is covalently cross-linked (Glycyl lysine isopeptide (Lys-Gly) (interchain with G-Cter in SUMO2); alternate). Residues 247–258 (ERNSKSPTEYHE) are compositionally biased toward basic and acidic residues. Positions 247–266 (ERNSKSPTEYHEPVYANPFC) are disordered. T270 carries the post-translational modification Phosphothreonine. Disordered stretches follow at residues 294–390 (LGNH…TCQE) and 451–533 (AEDN…GTED). Residues S321 and S349 each carry the phosphoserine modification. Residues 341-353 (HTQQKRMASPWEE) show a composition bias toward polar residues. Basic and acidic residues predominate over residues 354 to 365 (SSNRQNEHEVSP). Phosphoserine occurs at positions 370, 375, 384, 385, 498, 515, and 520.

It belongs to the paralemmin family. In terms of assembly, interacts with GLUL. Post-translationally, phosphorylated. In terms of tissue distribution, ubiquitous. Expressed at highest levels in the heart and lung.

It is found in the cytoplasm. Its subcellular location is the cell projection. The protein resides in the dendrite. It localises to the dendritic spine. This chain is Palmdelphin (Palmd), found in Mus musculus (Mouse).